An 85-amino-acid chain; its full sequence is MVEIVGSNYFNFPPTTLIVLALGSAIAYKFLSNISTNPYVPAVLGIILVFLGHGGVISTIGAGITGLAISRAIGKDVFNFLSKVS.

The next 2 membrane-spanning stretches (helical) occupy residues 12–32 and 44–64; these read FPPT…KFLS and LGII…GAGI.

It is found in the host membrane. This is Putative transmembrane protein ORF85 from Acidianus convivator (ABV).